The sequence spans 341 residues: Phenylalanine--tRNA ligase alpha subunit (341 aa).

Glu-256 contacts Mg(2+).

It belongs to the class-II aminoacyl-tRNA synthetase family. Phe-tRNA synthetase alpha subunit type 1 subfamily. In terms of assembly, tetramer of two alpha and two beta subunits. Mg(2+) serves as cofactor.

The protein resides in the cytoplasm. It catalyses the reaction tRNA(Phe) + L-phenylalanine + ATP = L-phenylalanyl-tRNA(Phe) + AMP + diphosphate + H(+). In Chlamydia abortus (strain DSM 27085 / S26/3) (Chlamydophila abortus), this protein is Phenylalanine--tRNA ligase alpha subunit.